We begin with the raw amino-acid sequence, 180 residues long: V-type proton ATPase subunit c''1 (180 aa).

Topologically, residues 1-26 are lumenal; the sequence is MSGVVALGHASSWGAALVRISPYTFS. The helical transmembrane segment at 27 to 47 threads the bilayer; it reads AIGIAISIGVSVLGAAWGIYI. The Cytoplasmic segment spans residues 48–66; the sequence is TGSSLIGAAIEAPRITSKN. A helical transmembrane segment spans residues 67 to 87; that stretch reads LISVIFCEAVAIYGVIVAIIL. The Lumenal portion of the chain corresponds to 88 to 110; it reads QTKLESVPSSKMYDAESLRAGYA. The helical transmembrane segment at 111 to 131 threads the bilayer; that stretch reads IFASGIIVGFANLVCGLCVGI. Residues 132–149 are Cytoplasmic-facing; the sequence is IGSSCALSDAQNSTLFVK. The helical transmembrane segment at 150 to 170 threads the bilayer; sequence ILVIEIFGSALGLFGVIVGII. The Lumenal portion of the chain corresponds to 171 to 180; it reads MSAQATWPTK.

It belongs to the V-ATPase proteolipid subunit family. V-ATPase is a heteromultimeric enzyme composed of a peripheral catalytic V1 complex (components A to H) attached to an integral membrane V0 proton pore complex (components: a, c, c'', d and e). The proteolipid components c and c'' are present as a hexameric ring that forms the proton-conducting pore. In terms of tissue distribution, preferentially expressed in roots.

The protein localises to the endoplasmic reticulum membrane. The protein resides in the golgi apparatus membrane. Functionally, proton-conducting pore forming subunit of the membrane integral V0 complex of vacuolar ATPase. V-ATPase is responsible for acidifying a variety of intracellular compartments in eukaryotic cells. This Arabidopsis thaliana (Mouse-ear cress) protein is V-type proton ATPase subunit c''1 (VHA-c''1).